The sequence spans 194 residues: Histone H1.0 (194 aa).

The residue at position 1 (Met1) is an N-acetylmethionine. Over residues 1-11 (MTENSTSAPAA) the composition is skewed to low complexity. The interval 1–29 (MTENSTSAPAAKPKRAKASKKSTDHPKYS) is disordered. Thr2 is subject to N-acetylthreonine; partial; in Histone H1.0, N-terminally processed. Deamidated asparagine; partial is present on Asn4. The 74-residue stretch at 24 to 97 (DHPKYSDMIV…GASGSFRLAK (74 aa)) folds into the H15 domain. Citrulline is present on Arg42. The interval 84-194 (TKGVGASGSF…SSAKRAGKKK (111 aa)) is disordered. An ADP-ribosylserine modification is found at Ser104. Basic residues predominate over residues 105–194 (VAFKKTKKEI…SSAKRAGKKK (90 aa)).

It belongs to the histone H1/H5 family. Post-translationally, phosphorylated on Ser-17 in RNA edited version. ADP-ribosylated on Ser-104 in response to DNA damage.

The protein localises to the nucleus. It localises to the chromosome. Histones H1 are necessary for the condensation of nucleosome chains into higher-order structures. The histones H1.0 are found in cells that are in terminal stages of differentiation or that have low rates of cell division. The sequence is that of Histone H1.0 from Homo sapiens (Human).